A 380-amino-acid polypeptide reads, in one-letter code: Septin homolog spn4 (380 aa).

The Septin-type G domain occupies 25–298 (NGVAFTLMLC…EQYRQEQMKV (274 aa)). Positions 35 to 42 (GESGLGKT) are G1 motif. GTP-binding positions include 35-42 (GESGLGKT), T70, G96, 175-183 (KADMYTRRD), G231, and R247. The G3 motif stretch occupies residues 93 to 96 (DTPG). The tract at residues 174-177 (AKAD) is G4 motif.

It belongs to the TRAFAC class TrmE-Era-EngA-EngB-Septin-like GTPase superfamily. Septin GTPase family. As to quaternary structure, component of the septin complex composed of two copies of each spn1, spn2, spn3 and spn4.

It localises to the cytoplasm. The protein resides in the cell cortex. Plays a role in the cell cycle. Involved in a late stage of septum formation leading to the separation of the daughter cells. This is Septin homolog spn4 (spn4) from Schizosaccharomyces pombe (strain 972 / ATCC 24843) (Fission yeast).